The sequence spans 276 residues: NH(3)-dependent NAD(+) synthetase (276 aa).

Position 46–53 (46–53 (GISGGQDS)) interacts with ATP. Asp52 serves as a coordination point for Mg(2+). Arg140 provides a ligand contact to deamido-NAD(+). Thr160 is a binding site for ATP. Glu165 is a Mg(2+) binding site. Deamido-NAD(+)-binding residues include Lys173 and Asp180. Positions 189 and 211 each coordinate ATP. 260–261 (HK) serves as a coordination point for deamido-NAD(+).

It belongs to the NAD synthetase family. Homodimer.

The enzyme catalyses deamido-NAD(+) + NH4(+) + ATP = AMP + diphosphate + NAD(+) + H(+). The protein operates within cofactor biosynthesis; NAD(+) biosynthesis; NAD(+) from deamido-NAD(+) (ammonia route): step 1/1. Catalyzes the ATP-dependent amidation of deamido-NAD to form NAD. Uses ammonia as a nitrogen source. The polypeptide is NH(3)-dependent NAD(+) synthetase (Citrobacter koseri (strain ATCC BAA-895 / CDC 4225-83 / SGSC4696)).